A 261-amino-acid polypeptide reads, in one-letter code: uncharacterized protein (261 aa).

Glu-46 is a catalytic residue.

This sequence belongs to the PhzF family.

This is an uncharacterized protein from Pseudomonas aeruginosa (strain ATCC 15692 / DSM 22644 / CIP 104116 / JCM 14847 / LMG 12228 / 1C / PRS 101 / PAO1).